Consider the following 52-residue polypeptide: MARYRCCRSRSLSRSRCYRQRPRCRRRRRRSCRRPRASRCCRRRYRLRRRRY.

Belongs to the protamine P1 family. Cross-linked by interchain disulfide bonds around the DNA-helix. In terms of tissue distribution, testis.

It localises to the nucleus. The protein resides in the chromosome. Its function is as follows. Protamines substitute for histones in the chromatin of sperm during the haploid phase of spermatogenesis. They compact sperm DNA into a highly condensed, stable and inactive complex. This Alouatta seniculus (Red howler monkey) protein is Sperm protamine P1 (PRM1).